We begin with the raw amino-acid sequence, 114 residues long: Protein gamma (114 aa).

This Bovine ephemeral fever virus (strain BB7721) (BEFV) protein is Protein gamma (gamma).